Reading from the N-terminus, the 175-residue chain is Myosin regulatory light chain 2, atrial isoform (175 aa).

The residue at position 2 (Ala2) is an N-acetylalanine. A phosphoserine mark is found at Ser22 and Ser23. 3 consecutive EF-hand domains span residues 32–67 (AQIQEFKEAFSCIDQNRDGIICKADLRETYSQLGKV), 102–137 (DPEEAILSAFRMFDPSGKGVVNKDEFKQLLLTQADK), and 138–173 (FSPAEVEQMFALTPMDLAGNIDYKSLCYIITHGDEK). Residues Asp45, Asn47, Asp49, and Asp56 each coordinate Ca(2+).

As to quaternary structure, myosin is a hexamer of 2 heavy chains and 4 light chains. In terms of tissue distribution, predominantly expressed in adult atrial muscle.

The chain is Myosin regulatory light chain 2, atrial isoform (MYL7) from Homo sapiens (Human).